A 196-amino-acid chain; its full sequence is Holliday junction branch migration complex subunit RuvA (196 aa).

A domain I region spans residues 1-65; that stretch reads MIGYLRGKII…EDALQLFGFH (65 aa). The interval 66 to 140 is domain II; that stretch reads DKEEKNLFLS…GKLVSIEEGG (75 aa). Positions 140–144 are flexible linker; that stretch reads GVVAK. The domain III stretch occupies residues 145 to 196; the sequence is AKSVAHTQITSALLNLGYKSQLVDQFVSSLPADIAVEDGIRKGFQTLSGGLS.

Belongs to the RuvA family. As to quaternary structure, homotetramer. Forms an RuvA(8)-RuvB(12)-Holliday junction (HJ) complex. HJ DNA is sandwiched between 2 RuvA tetramers; dsDNA enters through RuvA and exits via RuvB. An RuvB hexamer assembles on each DNA strand where it exits the tetramer. Each RuvB hexamer is contacted by two RuvA subunits (via domain III) on 2 adjacent RuvB subunits; this complex drives branch migration. In the full resolvosome a probable DNA-RuvA(4)-RuvB(12)-RuvC(2) complex forms which resolves the HJ.

It is found in the cytoplasm. The RuvA-RuvB-RuvC complex processes Holliday junction (HJ) DNA during genetic recombination and DNA repair, while the RuvA-RuvB complex plays an important role in the rescue of blocked DNA replication forks via replication fork reversal (RFR). RuvA specifically binds to HJ cruciform DNA, conferring on it an open structure. The RuvB hexamer acts as an ATP-dependent pump, pulling dsDNA into and through the RuvAB complex. HJ branch migration allows RuvC to scan DNA until it finds its consensus sequence, where it cleaves and resolves the cruciform DNA. This chain is Holliday junction branch migration complex subunit RuvA, found in Bdellovibrio bacteriovorus (strain ATCC 15356 / DSM 50701 / NCIMB 9529 / HD100).